Here is a 318-residue protein sequence, read N- to C-terminus: Isoeugenol synthase 1 (318 aa).

Residues 10-13 (TGYI), 32-43 (ARPLTPDSTPSS), Arg-33, 84-86 (VPM), 109-111 (SEF), Lys-131, and 151-153 (NCF) each bind NADP(+). Lys-131 (proton donor/acceptor) is an active-site residue. Pro-260 lines the substrate pocket.

It belongs to the NmrA-type oxidoreductase family. Mostly expressed in petals, and, to a lower extent, in sepals, stamens and pistils.

It catalyses the reaction (E)-isoeugenol + acetate + NADP(+) = (E)-coniferyl acetate + NADPH. It functions in the pathway aromatic compound metabolism; phenylpropanoid biosynthesis. Catalyzes the synthesis of the phenylpropene isoeugenol from coniferyl acetate. Phenylpropenes are the primary constituents of various essential plant oils. They are produced as antimicrobial and antianimal compounds, or as floral attractants of pollinators. Isoeugenol is a characteristic aromatic constituent of spices and a floral volatile compound. This chain is Isoeugenol synthase 1, found in Clarkia breweri (Fairy fans).